Reading from the N-terminus, the 251-residue chain is PF03932 family protein CutC (251 aa).

The protein belongs to the CutC family.

The protein localises to the cytoplasm. In Bacteroides fragilis (strain YCH46), this protein is PF03932 family protein CutC.